The following is a 314-amino-acid chain: 4-hydroxyproline 2-epimerase (314 aa).

Cys88 acts as the Proton acceptor in catalysis. Residues 89 to 90 (GH), His208, and Asp232 contribute to the substrate site. Residue Cys236 is the Proton donor of the active site. Position 237–238 (237–238 (GT)) interacts with substrate.

It belongs to the proline racemase family. Homodimer.

The catalysed reaction is trans-4-hydroxy-L-proline = cis-4-hydroxy-D-proline. Inhibited by iodoacetate, iodoacetamide and by high amounts (10 mM) of pyrrole-2-carboxylate (PYC). Not inhibited by PYC at 1 mM. In terms of biological role, allows intracellular utilization of 4-hydroxyproline, one of the major constituents of host collagen, by converting trans-4-hydroxy-L-proline (t4LHyp) to cis-4-hydroxy-D-proline (c4DHyp), which can be further metabolized by intracellular 4-hydroxy-D-proline oxidases. Strong B-cell mitogen. Plays an important role in the regulation of intra- and extracellular amino acid pools, allowing the bacterium to profit from host precursors and enzymatic pathways. Cannot use L-proline, trans-3-hydroxy-L-proline (t3LHyp) and pyrrolidone-5-carboxylate (P5C) as substrate. This is 4-hydroxyproline 2-epimerase from Pseudomonas aeruginosa (strain ATCC 15692 / DSM 22644 / CIP 104116 / JCM 14847 / LMG 12228 / 1C / PRS 101 / PAO1).